The chain runs to 466 residues: Small RNA degrading nuclease 2 (466 aa).

An Exonuclease domain is found at 142–298; it reads MIAIDCEMVL…HDAEAAMKLV (157 aa). The disordered stretch occupies residues 426-466; sequence EENNASSKKRKRENHSKGTRDRRRCKPLSRRKQRSNVKRRR. Residues 445-466 show a composition bias toward basic residues; the sequence is RDRRRCKPLSRRKQRSNVKRRR.

It belongs to the REXO1/REXO3 family.

It localises to the nucleus. Its function is as follows. 3'-5' exonuclease degrading single-stranded small RNAs. This chain is Small RNA degrading nuclease 2 (SDN2), found in Arabidopsis thaliana (Mouse-ear cress).